Consider the following 299-residue polypeptide: ATP phosphoribosyltransferase (299 aa).

It belongs to the ATP phosphoribosyltransferase family. Long subfamily. Equilibrium between an active dimeric form, an inactive hexameric form and higher aggregates. Interconversion between the various forms is largely reversible and is influenced by the natural substrates and inhibitors of the enzyme. Mg(2+) is required as a cofactor.

Its subcellular location is the cytoplasm. The enzyme catalyses 1-(5-phospho-beta-D-ribosyl)-ATP + diphosphate = 5-phospho-alpha-D-ribose 1-diphosphate + ATP. It participates in amino-acid biosynthesis; L-histidine biosynthesis; L-histidine from 5-phospho-alpha-D-ribose 1-diphosphate: step 1/9. Its activity is regulated as follows. Feedback inhibited by histidine. Catalyzes the condensation of ATP and 5-phosphoribose 1-diphosphate to form N'-(5'-phosphoribosyl)-ATP (PR-ATP). Has a crucial role in the pathway because the rate of histidine biosynthesis seems to be controlled primarily by regulation of HisG enzymatic activity. The sequence is that of ATP phosphoribosyltransferase from Buchnera aphidicola subsp. Acyrthosiphon pisum (strain 5A).